The primary structure comprises 586 residues: A-type ATP synthase subunit A (586 aa).

Position 232–239 (232–239 (GPFGSGKT)) interacts with ATP.

The protein belongs to the ATPase alpha/beta chains family. As to quaternary structure, has multiple subunits with at least A(3), B(3), C, D, E, F, H, I and proteolipid K(x).

Its subcellular location is the cell membrane. It catalyses the reaction ATP + H2O + 4 H(+)(in) = ADP + phosphate + 5 H(+)(out). Functionally, component of the A-type ATP synthase that produces ATP from ADP in the presence of a proton gradient across the membrane. The A chain is the catalytic subunit. This Methanococcus maripaludis (strain C5 / ATCC BAA-1333) protein is A-type ATP synthase subunit A.